The primary structure comprises 306 residues: Palmitoyl-protein thioesterase 1 (306 aa).

The signal sequence occupies residues 1 to 27 (MASPGCLWLLAVALLPWTCASRALQHL). Residue C6 is the site of S-palmitoyl cysteine; by ZDHHC3 and ZDHHC7 attachment. 3 disulfides stabilise this stretch: C45–C46, C96–C128, and C152–C160. Residue S115 is part of the active site. Residues N197, N212, and N232 are each glycosylated (N-linked (GlcNAc...) asparagine). Active-site residues include D233 and H289.

The protein belongs to the palmitoyl-protein thioesterase family. In terms of assembly, interacts with CLN5. Interacts with ATP5F1A and ATP5F1B. Post-translationally, glycosylated.

Its subcellular location is the lysosome. It localises to the secreted. The protein resides in the golgi apparatus. The protein localises to the endoplasmic reticulum. The catalysed reaction is S-hexadecanoyl-L-cysteinyl-[protein] + H2O = L-cysteinyl-[protein] + hexadecanoate + H(+). It catalyses the reaction hexadecanoyl-CoA + H2O = hexadecanoate + CoA + H(+). It carries out the reaction S-hexadecanoyl-N-acetylcysteamine + H2O = N-acetylcysteamine + hexadecanoate + H(+). The enzyme catalyses S-hexadecanoyl-N-acetylcysteine methyl ester + H2O = N-acetylcysteine methyl ester + hexadecanoate + H(+). Palmitoylation reduces PPT1 enzymatic activity. Functionally, has thioesterase activity against fatty acid thioesters with 14 -18 carbons, including palmitoyl-CoA, S-palmitoyl-N-acetylcysteamine, and palmitoylated proteins. In contrast to PPT2, PPT1 can hydrolyze palmitoylated proteins and palmitoylcysteine. The chain is Palmitoyl-protein thioesterase 1 (PPT1) from Homo sapiens (Human).